Here is a 484-residue protein sequence, read N- to C-terminus: tRNA-2-methylthio-N(6)-dimethylallyladenosine synthase (484 aa).

Positions 29 to 149 (GVFHIHTLGC…LPKLLDQNRA (121 aa)) constitute an MTTase N-terminal domain. C38, C78, C112, C186, C190, and C193 together coordinate [4Fe-4S] cluster. A Radical SAM core domain is found at 172–401 (RASRISSWVA…VALQEQITEE (230 aa)). The 71-residue stretch at 404–474 (ATFEGRDVEV…RHNLLADPDV (71 aa)) folds into the TRAM domain.

Belongs to the methylthiotransferase family. MiaB subfamily. As to quaternary structure, monomer. It depends on [4Fe-4S] cluster as a cofactor.

It localises to the cytoplasm. It catalyses the reaction N(6)-dimethylallyladenosine(37) in tRNA + (sulfur carrier)-SH + AH2 + 2 S-adenosyl-L-methionine = 2-methylsulfanyl-N(6)-dimethylallyladenosine(37) in tRNA + (sulfur carrier)-H + 5'-deoxyadenosine + L-methionine + A + S-adenosyl-L-homocysteine + 2 H(+). Its function is as follows. Catalyzes the methylthiolation of N6-(dimethylallyl)adenosine (i(6)A), leading to the formation of 2-methylthio-N6-(dimethylallyl)adenosine (ms(2)i(6)A) at position 37 in tRNAs that read codons beginning with uridine. In Bifidobacterium longum (strain DJO10A), this protein is tRNA-2-methylthio-N(6)-dimethylallyladenosine synthase.